Reading from the N-terminus, the 311-residue chain is Ribosomal RNA small subunit methyltransferase H (311 aa).

S-adenosyl-L-methionine-binding positions include 32-34, aspartate 52, phenylalanine 79, aspartate 100, and glutamine 107; that span reads AGH.

This sequence belongs to the methyltransferase superfamily. RsmH family.

Its subcellular location is the cytoplasm. It catalyses the reaction cytidine(1402) in 16S rRNA + S-adenosyl-L-methionine = N(4)-methylcytidine(1402) in 16S rRNA + S-adenosyl-L-homocysteine + H(+). Its function is as follows. Specifically methylates the N4 position of cytidine in position 1402 (C1402) of 16S rRNA. The polypeptide is Ribosomal RNA small subunit methyltransferase H (Staphylococcus aureus (strain COL)).